The sequence spans 1912 residues: Methylcytosine dioxygenase TET2 (1912 aa).

A compositionally biased stretch (basic and acidic residues) spans 1 to 11; that stretch reads MEQDRTTHAEG. Positions 1–86 are disordered; the sequence is MEQDRTTHAE…PHEDRGYSRC (86 aa). Residues S15 and S23 each carry the phosphoserine modification. Residues 53–74 show a composition bias toward polar residues; it reads TKWQSSQSCYGISHMKGSQSSH. A phosphoserine mark is found at S76 and S97. Disordered stretches follow at residues 112 to 166, 340 to 359, 367 to 388, 429 to 470, 673 to 723, 832 to 862, 907 to 966, and 1009 to 1052; these read LDQK…FPTR, DRNL…QKET, SSKF…QSLL, IDHQ…PEKS, PQTQ…DKQR, EQAQ…AEAA, QEQQ…NGQP, and ESEN…EGCN. Composition is skewed to polar residues over residues 135–158, 340–353, 367–387, 434–447, and 673–689; these read SRQP…QESS, DRNL…SEQY, SSKF…SQSL, KTSS…SVHT, and PQTQ…SNFP. Residues 690–701 are compositionally biased toward low complexity; that stretch reads QICQQQQQQQLQ. 2 stretches are compositionally biased toward polar residues: residues 707–719 and 832–844; these read QMPQ…QGSN and EQAQ…SSLQ. Over residues 907-921 the composition is skewed to low complexity; that stretch reads QEQQQTQQSQPGHNQ. Polar residues-rich tracts occupy residues 944–966 and 1036–1046; these read PQEN…NGQP and SDTPGEQSQNG. S1036 bears the Phosphoserine mark. Zn(2+) contacts are provided by C1048, C1106, H1132, and C1134. R1174 contributes to the 2-oxoglutarate binding site. Residues C1184, C1186, C1202, and C1211 each coordinate Zn(2+). Residues 1203 to 1216 form an interaction with DNA region; that stretch reads SWSMYYNGCKFARS. A Glycyl lysine isopeptide (Lys-Gly) (interchain with G-Cter in ubiquitin) cross-link involves residue K1212. C1271 is a binding site for Zn(2+). 2-oxoglutarate is bound at residue C1287. H1293 provides a ligand contact to Zn(2+). 2 residues coordinate Fe cation: H1295 and D1297. N1300 lines the substrate pocket. Residue H1329 coordinates 2-oxoglutarate. Disordered stretches follow at residues 1379–1414 and 1444–1514; these read KKKA…SSSH and LQRH…HTSD. Residues 1387–1396 show a composition bias toward basic residues; that stretch reads AKTKKAARKR. Pro residues predominate over residues 1456–1473; the sequence is QPQPPQPQPQTTPQPQPQ. Residues 1480 to 1512 show a composition bias toward polar residues; it reads GNSQSVGSHCSGSTSVYTRQPTPHSPYPSSAHT. Residue H1795 coordinates Fe cation. 1810–1812 serves as a coordination point for 2-oxoglutarate; the sequence is RIS. 1816-1818 serves as a coordination point for substrate; it reads YRH. Residue H1826 coordinates Zn(2+). Residues 1842–1866 are compositionally biased toward basic and acidic residues; that stretch reads EEECGKNGSDHVSQKNHGKQEKREP. Residues 1842 to 1871 are disordered; that stretch reads EEECGKNGSDHVSQKNHGKQEKREPTGPQE.

This sequence belongs to the TET family. In terms of assembly, interacts with HCFC1. Interacts with OGT. Interacts with PROSER1; this interaction mediates TET2 O-GlcNAcylation and stability by promoting the interaction between OGT and TET2. Directly interacts (via C-terminus) with the DCAF1 component of the CRL4(VprBP) E3 ubiquitin-protein ligase complex. Fe(2+) serves as cofactor. Requires Zn(2+) as cofactor. May be glycosylated. It is unclear whether interaction with OGT leads to GlcNAcylation. According to a report, it is GlcNAcylated by OGT. In contrast, another group reports no GlcNAcylation by OGT in human ortholog. In terms of processing, monoubiquitinated at Lys-1212 by the DCX (DDB1-CUL4-X-box) E3 ubiquitin-protein ligase complex called CRL4(VprBP) or CUL4A-RBX1-DDB1-DCAF1/VPRBP complex; this modification promotes binding to DNA. Post-translationally, acetylated. As to expression, expressed in the brain, kidney, heart, lung, muscle and stomach. Expressed in germinal vesicle (GV) stage and MII-stage oocytes and in early embryos. Present in embryonic stem cells (ES cells).

The protein localises to the nucleus. Its subcellular location is the chromosome. It carries out the reaction a 5-methyl-2'-deoxycytidine in DNA + 2-oxoglutarate + O2 = a 5-hydroxymethyl-2'-deoxycytidine in DNA + succinate + CO2. It catalyses the reaction a 5-hydroxymethyl-2'-deoxycytidine in DNA + 2-oxoglutarate + O2 = a 5-formyl-2'-deoxycytidine in DNA + succinate + CO2 + H2O. The enzyme catalyses a 5-formyl-2'-deoxycytidine in DNA + 2-oxoglutarate + O2 = a 5-carboxyl-2'-deoxycytidine in DNA + succinate + CO2 + H(+). In terms of biological role, dioxygenase that catalyzes the conversion of the modified genomic base 5-methylcytosine (5mC) into 5-hydroxymethylcytosine (5hmC) and plays a key role in active DNA demethylation. Has a preference for 5-hydroxymethylcytosine in CpG motifs. Also mediates subsequent conversion of 5hmC into 5-formylcytosine (5fC), and conversion of 5fC to 5-carboxylcytosine (5caC). Conversion of 5mC into 5hmC, 5fC and 5caC probably constitutes the first step in cytosine demethylation. Methylation at the C5 position of cytosine bases is an epigenetic modification of the mammalian genome which plays an important role in transcriptional regulation. In addition to its role in DNA demethylation, also involved in the recruitment of the O-GlcNAc transferase OGT to CpG-rich transcription start sites of active genes, thereby promoting histone H2B GlcNAcylation by OGT. This Mus musculus (Mouse) protein is Methylcytosine dioxygenase TET2 (Tet2).